We begin with the raw amino-acid sequence, 191 residues long: Small ribosomal subunit protein bS6 (191 aa).

Positions 168–191 (KVNLTRKPTPNKSSENKQKVEKQA) are disordered. A compositionally biased stretch (basic and acidic residues) spans 181–191 (SENKQKVEKQA).

This sequence belongs to the bacterial ribosomal protein bS6 family.

Binds together with bS18 to 16S ribosomal RNA. This is Small ribosomal subunit protein bS6 from Mycoplasmoides gallisepticum (strain R(low / passage 15 / clone 2)) (Mycoplasma gallisepticum).